The following is a 664-amino-acid chain: Transmembrane protein 201 (664 aa).

Position 1 is an N-acetylmethionine (Met-1). Over 1-214 (MEGVSALLAS…SSSAVKAPFQ (214 aa)) the chain is Nuclear. A helical membrane pass occupies residues 215–235 (VILLRALAFLACAFLLFTTLY). The Perinuclear space portion of the chain corresponds to 236–297 (GPSEPFTPGA…EAWAFGQSHQ (62 aa)). A compositionally biased stretch (low complexity) spans 245-261 (AALPPALPPGGNSSAAS). Positions 245 to 264 (AALPPALPPGGNSSAASDNT) are disordered. Residues 298 to 318 (TSIVAVGLLTCLLAMLLAGRI) traverse the membrane as a helical segment. The Nuclear portion of the chain corresponds to 319–322 (RLRR). A helical transmembrane segment spans residues 323-343 (IDAFSTCLWALLLGLHLAEHY). Topologically, residues 344 to 356 (LQAASPGWLDTLK) are perinuclear space. Residues 357–374 (FSTTSLCCLVGFTAAVAT) form a helical membrane-spanning segment. Residues 375–642 (RKSTGPRRFR…ARVSPSLVRG (268 aa)) lie on the Nuclear side of the membrane. Ser-441, Ser-444, Ser-450, Ser-454, Ser-466, Ser-477, and Ser-480 each carry phosphoserine. Residues 502–522 (PLPSPAPSVASSVASSSGSLR) form a disordered region. A compositionally biased stretch (low complexity) spans 508–520 (PSVASSVASSSGS). The residue at position 529 (Ser-529) is a Phosphoserine. Residues 544–629 (SSPGEAPNTP…TTKGCSEETT (86 aa)) form a disordered region. Basic and acidic residues-rich tracts occupy residues 578–587 (HTRDTKHTME) and 595–608 (DSAR…KEDE). Residues 610–628 (SQSSTCVVDTTTKGCSEET) are compositionally biased toward polar residues. A helical membrane pass occupies residues 643–663 (LLAVSLAVNALFTSAYLYQSL). Residue Arg-664 is a topological domain, perinuclear space.

It belongs to the TMEM201 family. Isoform 2 interacts with EMD. Isoform 3 interacts with SUN2 and LMNA. May bind to Ran GTPase; has a greater affinity for Ran-GTP over Ran-GDP.

It is found in the nucleus inner membrane. In terms of biological role, critical regulator of angiogenesis and endothelial cell (EC) migration. Promotes the migration of endothelial cells, which is essential for angiogenesis. Interacts with the linker of nucleoskeleton and cytoskeleton (LINC) complex, which plays a vital role in connecting the cell's cytoskeleton to the nuclear envelope. This interaction is essential for maintaining cellular structure and facilitating the movement of endothelial cells, which is critical for proper vascular development. Involved in nuclear movement during fibroblast polarization and migration. May recruit Ran GTPase to the nuclear periphery. Functionally, may define a distinct membrane domain in the vicinity of the mitotic spindle. Involved in the organization of the nuclear envelope implicating EMD, SUN1 and A-type lamina. Its function is as follows. Proposed to be involved in actin-dependent nuclear movement; via SUN2 associates with transmembrane actin-associated nuclear (TAN) lines which are bound to F-actin cables and couple the nucleus to retrograde actin flow. The sequence is that of Transmembrane protein 201 (Tmem201) from Mus musculus (Mouse).